A 458-amino-acid polypeptide reads, in one-letter code: Adenylosuccinate synthetase (458 aa).

Residues Gly-17 to Lys-23 and Gly-45 to Thr-47 contribute to the GTP site. Asp-18 acts as the Proton acceptor in catalysis. 2 residues coordinate Mg(2+): Asp-18 and Gly-45. IMP-binding positions include Asp-18–Lys-21, Asn-43–His-46, Thr-137, Arg-151, Gln-247, Thr-262, and Arg-330. Residue His-46 is the Proton donor of the active site. Val-326–Arg-332 contributes to the substrate binding site. GTP-binding positions include Arg-332, Lys-358–Asp-360, and Ser-440–Ser-442.

It belongs to the adenylosuccinate synthetase family. In terms of assembly, homodimer. Mg(2+) is required as a cofactor.

It is found in the cytoplasm. It catalyses the reaction IMP + L-aspartate + GTP = N(6)-(1,2-dicarboxyethyl)-AMP + GDP + phosphate + 2 H(+). The protein operates within purine metabolism; AMP biosynthesis via de novo pathway; AMP from IMP: step 1/2. Its function is as follows. Plays an important role in the de novo pathway of purine nucleotide biosynthesis. Catalyzes the first committed step in the biosynthesis of AMP from IMP. This chain is Adenylosuccinate synthetase, found in Delftia acidovorans (strain DSM 14801 / SPH-1).